The primary structure comprises 164 residues: C-phycoerythrin class 1 subunit alpha (164 aa).

(2R,3E)-phycoerythrobilin-binding residues include cysteine 82 and cysteine 139.

Belongs to the phycobiliprotein family. In terms of assembly, heterodimer of an alpha and a beta chain. Contains two covalently linked phycoerythrobilin chromophores.

It is found in the cellular thylakoid membrane. Its function is as follows. Light-harvesting photosynthetic bile pigment-protein from the phycobiliprotein complex. This chain is C-phycoerythrin class 1 subunit alpha (cpeA), found in Synechococcus sp. (strain WH8020).